Consider the following 208-residue polypeptide: Interleukin-6 (208 aa).

Positions 1–29 (MNSLFTSAFSPLAVSLGLLLVMTSAFPTP) are cleaved as a signal peptide. Asparagine 38 carries an N-linked (GlcNAc...) asparagine glycan. An intrachain disulfide couples cysteine 72 to cysteine 78. At serine 81 the chain carries Phosphoserine. A disulfide bridge links cysteine 101 with cysteine 111.

It belongs to the IL-6 superfamily. Component of a hexamer of two molecules each of IL6, IL6R and IL6ST; first binds to IL6R to associate with the signaling subunit IL6ST. Interacts with IL6R (via the N-terminal ectodomain); this interaction may be affected by IL6R-binding with SORL1, hence decreasing IL6 cis signaling. Interacts with SORL1 (via the N-terminal ectodomain); this interaction leads to IL6 internalization and lysosomal degradation. May form a trimeric complex with the soluble SORL1 ectodomain and soluble IL6R receptor; this interaction might stabilize circulating IL6, hence promoting IL6 trans signaling.

It is found in the secreted. Cytokine with a wide variety of biological functions in immunity, tissue regeneration, and metabolism. Binds to IL6R, then the complex associates to the signaling subunit IL6ST/gp130 to trigger the intracellular IL6-signaling pathway. The interaction with the membrane-bound IL6R and IL6ST stimulates 'classic signaling', whereas the binding of IL6 and soluble IL6R to IL6ST stimulates 'trans-signaling'. Alternatively, 'cluster signaling' occurs when membrane-bound IL6:IL6R complexes on transmitter cells activate IL6ST receptors on neighboring receiver cells. Functionally, IL6 is a potent inducer of the acute phase response. Rapid production of IL6 contributes to host defense during infection and tissue injury, but excessive IL6 synthesis is involved in disease pathology. In the innate immune response, is synthesized by myeloid cells, such as macrophages and dendritic cells, upon recognition of pathogens through toll-like receptors (TLRs) at the site of infection or tissue injury. In the adaptive immune response, is required for the differentiation of B cells into immunoglobulin-secreting cells. Plays a major role in the differentiation of CD4(+) T cell subsets. Essential factor for the development of T follicular helper (Tfh) cells that are required for the induction of germinal-center formation. Required to drive naive CD4(+) T cells to the Th17 lineage. Also required for proliferation of myeloma cells and the survival of plasmablast cells. In terms of biological role, acts as an essential factor in bone homeostasis and on vessels directly or indirectly by induction of VEGF, resulting in increased angiogenesis activity and vascular permeability. Induces, through 'trans-signaling' and synergistically with IL1B and TNF, the production of VEGF. Involved in metabolic controls, is discharged into the bloodstream after muscle contraction increasing lipolysis and improving insulin resistance. 'Trans-signaling' in central nervous system also regulates energy and glucose homeostasis. Mediates, through GLP-1, crosstalk between insulin-sensitive tissues, intestinal L cells and pancreatic islets to adapt to changes in insulin demand. Also acts as a myokine. Plays a protective role during liver injury, being required for maintenance of tissue regeneration. Also has a pivotal role in iron metabolism by regulating HAMP/hepcidin expression upon inflammation or bacterial infection. Through activation of IL6ST-YAP-NOTCH pathway, induces inflammation-induced epithelial regeneration. The protein is Interleukin-6 (IL6) of Capra hircus (Goat).